We begin with the raw amino-acid sequence, 139 residues long: Trafficking protein particle complex subunit 2-like protein (139 aa).

The protein belongs to the TRAPP small subunits family. Sedlin subfamily. As to quaternary structure, component of the multisubunit TRAPP (transport protein particle) complex, which includes at least TRAPPC2, TRAPPC2L, TRAPPC3, TRAPPC3L, TRAPPC4, TRAPPC5, TRAPPC8, TRAPPC9, TRAPPC10, TRAPPC11 and TRAPPC12. Interacts with the heterodimer TRAPPC3-TRAPPC6A.

It localises to the cytoplasm. It is found in the perinuclear region. The protein localises to the endoplasmic reticulum. Its subcellular location is the golgi apparatus. Functionally, may play a role in vesicular transport from endoplasmic reticulum to Golgi. This chain is Trafficking protein particle complex subunit 2-like protein (Trappc2l), found in Rattus norvegicus (Rat).